The chain runs to 312 residues: tRNA uridine(34) hydroxylase (312 aa).

In terms of domain architecture, Rhodanese spans 145 to 235; the sequence is ENKNSVLVDM…GIIKYVRDAR (91 aa). Cysteine 199 serves as the catalytic Cysteine persulfide intermediate.

It belongs to the TrhO family.

It catalyses the reaction uridine(34) in tRNA + AH2 + O2 = 5-hydroxyuridine(34) in tRNA + A + H2O. Functionally, catalyzes oxygen-dependent 5-hydroxyuridine (ho5U) modification at position 34 in tRNAs. This Buchnera aphidicola subsp. Baizongia pistaciae (strain Bp) protein is tRNA uridine(34) hydroxylase.